The chain runs to 432 residues: Adenylosuccinate synthetase (432 aa).

Residues 13–19 (GDEGKGK) and 41–43 (GHT) each bind GTP. Asp-14 functions as the Proton acceptor in the catalytic mechanism. Mg(2+) is bound by residues Asp-14 and Gly-41. IMP-binding positions include 14–17 (DEGK), 39–42 (NAGH), Thr-130, Arg-144, Gln-225, Thr-240, and Arg-304. His-42 acts as the Proton donor in catalysis. 300–306 (STTGRPR) provides a ligand contact to substrate. Residues Arg-306, 332–334 (KLD), and 416–418 (STG) each bind GTP.

The protein belongs to the adenylosuccinate synthetase family. In terms of assembly, homodimer. The cofactor is Mg(2+).

The protein resides in the cytoplasm. It carries out the reaction IMP + L-aspartate + GTP = N(6)-(1,2-dicarboxyethyl)-AMP + GDP + phosphate + 2 H(+). The protein operates within purine metabolism; AMP biosynthesis via de novo pathway; AMP from IMP: step 1/2. Its function is as follows. Plays an important role in the de novo pathway of purine nucleotide biosynthesis. Catalyzes the first committed step in the biosynthesis of AMP from IMP. The protein is Adenylosuccinate synthetase of Nitrosomonas eutropha (strain DSM 101675 / C91 / Nm57).